We begin with the raw amino-acid sequence, 844 residues long: MEKTKTKQGENEHMPVNNPSTQIYQLQALASELKTGFTEAMQELSRIQHGEYALEEKVKSCRCSMEEKVTEMKNSLNYFKEELSNAMSMIQAITSKQEEMQQKIEQLQQEKRRESRKVKAKKTQKEEHSSQAGPAQAQGSPFRSINIPEPVLPSEDFTNLLPSQAYEKAQESRSVHVGDSNVKGMMGPGVNPTTPEAEENLKSCLSADIQSKGHLPSGMWRQPKDGKEWGEEYVTKDHPDKLKEAGQGRHSSLENVLCETSLAAKRQTVALELLESERKYVINISLILKIKATFQGSDGKRNSKERSLFPGSLRYLVQQHLDLLHALQERVLKWPRQGVLGDLFLKLTNDENNFLDYYVAYLRDLPECISLVHVVVLKEGDEEIKSDIYTLFFHIVQRIPEYLIHLQNVLKFTEQEHPDYYLLLVCVQRLRVFISHYTLLFQCNEDLLIQKRKKLKKSSMAKLYKGLASQCANAGQDASPTAGPEAVRDTGIHSEELLQPYPSAPSSGPAITHLMPPVKKSQQQQSLMESMQPGKPSDWELEGRKHERPESLLAPTQFCAAEQDVKALAGPLQAIPEMDFESSPAEPLGNVERSLRAPAELLPDARGFVPAAYEEFEYGGEIFALPAPYDEEPFQAPALFENCSPASSESSLDICFLRPVSFAMEAERPEHPLQPLPKSATSPAGSSSAYKLEAAAQAHGKAKPLSRSLKEFPRAPPADGVAPRLYSTRSSSGGRAPIKAERAAQAHGPAAAAVAARGASRTFFPQQRSQSEKQTYLEVRREMHLEDTTRFCPKEERESEQTSFSDQNPRQDQKGGFRSSFRKLFKKKNGNATGEDFCGPWGWW.

Composition is skewed to basic and acidic residues over residues 1 to 13 and 101 to 113; these read MEKT…ENEH and QQKI…EKRR. Disordered stretches follow at residues 1–20, 101–142, and 169–189; these read MEKT…NNPS, QQKI…GSPF, and AQES…MGPG. Positions 54–129 form a coiled coil; the sequence is LEEKVKSCRC…AKKTQKEEHS (76 aa). Over residues 130–142 the composition is skewed to polar residues; it reads SQAGPAQAQGSPF. Residues 265–440 enclose the DH domain; sequence KRQTVALELL…RVFISHYTLL (176 aa). Disordered stretches follow at residues 498–541, 668–687, and 702–745; these read LQPY…DWEL, RPEH…AGSS, and AKPL…RAAQ. Arginine 757 carries the omega-N-methylarginine modification. Basic and acidic residues predominate over residues 787–800; the sequence is DTTRFCPKEERESE. Residues 787-844 form a disordered region; it reads DTTRFCPKEERESEQTSFSDQNPRQDQKGGFRSSFRKLFKKKNGNATGEDFCGPWGWW. Basic residues predominate over residues 820–829; that stretch reads SFRKLFKKKN.

In terms of biological role, may act as a guanine-nucleotide releasing factor. The sequence is that of Rho guanine nucleotide exchange factor 33 (ARHGEF33) from Homo sapiens (Human).